Consider the following 679-residue polypeptide: Translation initiation factor IF-2 (679 aa).

The tr-type G domain occupies 178 to 347; the sequence is KRPPIITVMG…LLTSEMQELK (170 aa). The segment at 187 to 194 is G1; sequence GHVDHGKT. Residue 187 to 194 coordinates GTP; it reads GHVDHGKT. A G2 region spans residues 212-216; sequence GITQH. The segment at 233–236 is G3; that stretch reads DTPG. Residues 233–237 and 287–290 contribute to the GTP site; these read DTPGH and NKMD. The interval 287–290 is G4; it reads NKMD. The G5 stretch occupies residues 323–325; sequence SAK.

Belongs to the TRAFAC class translation factor GTPase superfamily. Classic translation factor GTPase family. IF-2 subfamily.

The protein localises to the cytoplasm. In terms of biological role, one of the essential components for the initiation of protein synthesis. Protects formylmethionyl-tRNA from spontaneous hydrolysis and promotes its binding to the 30S ribosomal subunits. Also involved in the hydrolysis of GTP during the formation of the 70S ribosomal complex. The protein is Translation initiation factor IF-2 of Clostridium perfringens (strain ATCC 13124 / DSM 756 / JCM 1290 / NCIMB 6125 / NCTC 8237 / Type A).